We begin with the raw amino-acid sequence, 62 residues long: Large ribosomal subunit protein uL30 (62 aa).

This sequence belongs to the universal ribosomal protein uL30 family. Part of the 50S ribosomal subunit.

The sequence is that of Large ribosomal subunit protein uL30 from Nitrosospira multiformis (strain ATCC 25196 / NCIMB 11849 / C 71).